The primary structure comprises 302 residues: tRNA-cytidine(32) 2-sulfurtransferase (302 aa).

A PP-loop motif motif is present at residues 45 to 50; it reads SGGKDS. [4Fe-4S] cluster is bound by residues Cys-120, Cys-123, and Cys-211.

This sequence belongs to the TtcA family. As to quaternary structure, homodimer. It depends on Mg(2+) as a cofactor. [4Fe-4S] cluster serves as cofactor.

It is found in the cytoplasm. It catalyses the reaction cytidine(32) in tRNA + S-sulfanyl-L-cysteinyl-[cysteine desulfurase] + AH2 + ATP = 2-thiocytidine(32) in tRNA + L-cysteinyl-[cysteine desulfurase] + A + AMP + diphosphate + H(+). Its pathway is tRNA modification. Catalyzes the ATP-dependent 2-thiolation of cytidine in position 32 of tRNA, to form 2-thiocytidine (s(2)C32). The sulfur atoms are provided by the cysteine/cysteine desulfurase (IscS) system. The chain is tRNA-cytidine(32) 2-sulfurtransferase from Cellvibrio japonicus (strain Ueda107) (Pseudomonas fluorescens subsp. cellulosa).